We begin with the raw amino-acid sequence, 266 residues long: Large ribosomal subunit protein eL8 (266 aa).

Residues lysine 11, lysine 20, and lysine 21 each participate in a glycyl lysine isopeptide (Lys-Gly) (interchain with G-Cter in SUMO2) cross-link. N6-acetyllysine is present on lysine 34. Lysine 48 participates in a covalent cross-link: Glycyl lysine isopeptide (Lys-Gly) (interchain with G-Cter in SUMO2). Position 97 is an N6-acetyllysine; alternate (lysine 97). Lysine 97 is covalently cross-linked (Glycyl lysine isopeptide (Lys-Gly) (interchain with G-Cter in SUMO2); alternate). Lysine 125 participates in a covalent cross-link: Glycyl lysine isopeptide (Lys-Gly) (interchain with G-Cter in SUMO2). N6-acetyllysine is present on lysine 217. Lysine 245 is covalently cross-linked (Glycyl lysine isopeptide (Lys-Gly) (interchain with G-Cter in SUMO2)).

The protein belongs to the eukaryotic ribosomal protein eL8 family. Component of the large ribosomal subunit. Interacts with CRY1. Interacts with DICER1, AGO2, TARBP2, MOV10 and EIF6; they form a large RNA-induced silencing complex (RISC).

It localises to the cytoplasm. In terms of biological role, component of the large ribosomal subunit. The ribosome is a large ribonucleoprotein complex responsible for the synthesis of proteins in the cell. This is Large ribosomal subunit protein eL8 (RPL7A) from Bos taurus (Bovine).